The following is a 124-amino-acid chain: Large ribosomal subunit protein bL12 (124 aa).

It belongs to the bacterial ribosomal protein bL12 family. As to quaternary structure, homodimer. Part of the ribosomal stalk of the 50S ribosomal subunit. Forms a multimeric L10(L12)X complex, where L10 forms an elongated spine to which 2 to 4 L12 dimers bind in a sequential fashion. Binds GTP-bound translation factors.

Functionally, forms part of the ribosomal stalk which helps the ribosome interact with GTP-bound translation factors. Is thus essential for accurate translation. The chain is Large ribosomal subunit protein bL12 from Wolinella succinogenes (strain ATCC 29543 / DSM 1740 / CCUG 13145 / JCM 31913 / LMG 7466 / NCTC 11488 / FDC 602W) (Vibrio succinogenes).